The primary structure comprises 559 residues: Amino-acid acetyltransferase, mitochondrial (559 aa).

The segment at 162–188 is disordered; sequence RLGPKPGSEDPTSELDFTPPETHTLPP. The 177-residue stretch at 362 to 538 folds into the N-acetyltransferase domain; that stretch reads LPVQVFHSVS…GSAGLSYVED (177 aa).

The protein belongs to the acetyltransferase family.

It is found in the mitochondrion. It catalyses the reaction L-glutamate + acetyl-CoA = N-acetyl-L-glutamate + CoA + H(+). Its pathway is amino-acid biosynthesis; L-arginine biosynthesis; N(2)-acetyl-L-ornithine from L-glutamate: step 1/4. Functionally, N-acetylglutamate synthase involved in arginine biosynthesis. This is Amino-acid acetyltransferase, mitochondrial (ARG2) from Laccaria bicolor (strain S238N-H82 / ATCC MYA-4686) (Bicoloured deceiver).